We begin with the raw amino-acid sequence, 337 residues long: Probable phospholipase A1 magnifin (337 aa).

Residues 1–21 form the signal peptide; the sequence is MNLKYLLLFFCLVQVLHYCYS. Residues 22–33 constitute a propeptide that is removed on maturation; it reads HGDPSLSNELDR. Cys-39 and Cys-123 are disulfide-bonded. Ser-173 functions as the Nucleophile in the catalytic mechanism. Asp-201 serves as the catalytic Charge relay system. 2 cysteine pairs are disulfide-bonded: Cys-212–Cys-217 and Cys-255–Cys-264. His-266 functions as the Charge relay system in the catalytic mechanism. 3 cysteine pairs are disulfide-bonded: Cys-281–Cys-305, Cys-282–Cys-330, and Cys-298–Cys-303.

It belongs to the AB hydrolase superfamily. Lipase family. In terms of tissue distribution, expressed by the venom gland.

The protein resides in the secreted. The catalysed reaction is a 1,2-diacyl-sn-glycero-3-phosphocholine + H2O = a 2-acyl-sn-glycero-3-phosphocholine + a fatty acid + H(+). In terms of biological role, catalyzes the hydrolysis of phosphatidylcholine with phospholipase A1 activity. May act as an allergen and induce hemolytic activity. In vivo, induces dose-dependent platelet aggregation (nanomolar concentration) and induces thrombosis. This Vespa magnifica (Hornet) protein is Probable phospholipase A1 magnifin.